The sequence spans 1019 residues: Exportin-T (1019 aa).

Belongs to the exportin family.

The protein resides in the nucleus. The protein localises to the cytoplasm. Functionally, tRNA nucleus export receptor which facilitates tRNA translocation across the nuclear pore complex. Involved in pre-tRNA splicing, probably by affecting the interaction of pre-tRNA with splicing endonuclease. The polypeptide is Exportin-T (LOS1) (Chaetomium globosum (strain ATCC 6205 / CBS 148.51 / DSM 1962 / NBRC 6347 / NRRL 1970) (Soil fungus)).